Reading from the N-terminus, the 226-residue chain is Enolase-phosphatase E1 (226 aa).

It belongs to the HAD-like hydrolase superfamily. MasA/MtnC family. As to quaternary structure, monomer. Mg(2+) is required as a cofactor.

The catalysed reaction is 5-methylsulfanyl-2,3-dioxopentyl phosphate + H2O = 1,2-dihydroxy-5-(methylsulfanyl)pent-1-en-3-one + phosphate. The protein operates within amino-acid biosynthesis; L-methionine biosynthesis via salvage pathway; L-methionine from S-methyl-5-thio-alpha-D-ribose 1-phosphate: step 3/6. It participates in amino-acid biosynthesis; L-methionine biosynthesis via salvage pathway; L-methionine from S-methyl-5-thio-alpha-D-ribose 1-phosphate: step 4/6. In terms of biological role, bifunctional enzyme that catalyzes the enolization of 2,3-diketo-5-methylthiopentyl-1-phosphate (DK-MTP-1-P) into the intermediate 2-hydroxy-3-keto-5-methylthiopentenyl-1-phosphate (HK-MTPenyl-1-P), which is then dephosphorylated to form the acireductone 1,2-dihydroxy-3-keto-5-methylthiopentene (DHK-MTPene). The chain is Enolase-phosphatase E1 from Shewanella sp. (strain W3-18-1).